A 482-amino-acid chain; its full sequence is Guanine nucleotide exchange factor SRM1 (482 aa).

Polar residues predominate over residues 1–11 (MVKRTVATNGD). The tract at residues 1 to 22 (MVKRTVATNGDASGAHRAKKMS) is disordered. Residues 15-26 (AHRAKKMSKTHA) carry the Nuclear localization signal motif. RCC1 repeat units lie at residues 45 to 101 (PLDI…ALDE), 103 to 152 (SNVW…TPAK), 183 to 238 (NGEV…FLDE), 239 to 291 (EGMV…ALTK), 292 to 347 (DNKL…ILSQ), 349 to 411 (GDLY…AVAQ), and 412 to 466 (NGIA…SGGV). Positions 128–158 (KDMDADDSSDDEDGDLNELESTPAKIPRESF) are disordered. The span at 131–145 (DADDSSDDEDGDLNE) shows a compositional bias: acidic residues. S135 and S136 each carry phosphoserine.

In terms of assembly, component of a multicomponent complex composed of six to seven proteins, which has a collective molecular mass greater than 150 kDa. Interacts with GSP1 and YRB2. Phosphorylated; possibly by KSP1.

The protein resides in the nucleus. Guanine nucleotide exchange factor that promotes the exchange of GSP1/GSP2-bound GDP by GTP and controls RNA metabolism and transport. Involved in yeast pheromone response pathway and in mRNA metabolism. Involved in nuclear pore complex (NPC) assembly and required for mRNA and ribosome nuclear export. Binds chromatin and is involved NPC-mediated transcriptional control. This Saccharomyces cerevisiae (strain ATCC 204508 / S288c) (Baker's yeast) protein is Guanine nucleotide exchange factor SRM1 (SRM1).